The chain runs to 289 residues: Syntaxin-2 (289 aa).

Topologically, residues 1–265 (MRDRLPDLTA…KYQSKARRKK (265 aa)) are cytoplasmic. Residues 68–101 (EGKIKEELEDLDKEIKKTANRIRGKLKSIEQSCD) are a coiled coil. In terms of domain architecture, t-SNARE coiled-coil homology spans 192–254 (LNEIESRHKD…EHAKEETKKA (63 aa)). Residues 266–289 (WIIAAVAVAVIAVLALIIGLSVGK) traverse the membrane as a helical; Anchor for type IV membrane protein segment.

This sequence belongs to the syntaxin family. As to quaternary structure, interacts with SYT6 and SYT8; the interaction is Ca(2+)-dependent.

Its subcellular location is the membrane. Functionally, essential for epithelial morphogenesis. May mediate Ca(2+)-regulation of exocytosis acrosomal reaction in sperm. The polypeptide is Syntaxin-2 (Stx2) (Mus musculus (Mouse)).